Consider the following 360-residue polypeptide: Phosphoserine aminotransferase (360 aa).

Residue R42 coordinates L-glutamate. W102, T152, D171, and Q194 together coordinate pyridoxal 5'-phosphate. K195 is modified (N6-(pyridoxal phosphate)lysine). Pyridoxal 5'-phosphate is bound at residue 237 to 238 (NT).

The protein belongs to the class-V pyridoxal-phosphate-dependent aminotransferase family. SerC subfamily. As to quaternary structure, homodimer. Requires pyridoxal 5'-phosphate as cofactor.

The protein localises to the cytoplasm. It carries out the reaction O-phospho-L-serine + 2-oxoglutarate = 3-phosphooxypyruvate + L-glutamate. The catalysed reaction is 4-(phosphooxy)-L-threonine + 2-oxoglutarate = (R)-3-hydroxy-2-oxo-4-phosphooxybutanoate + L-glutamate. The protein operates within amino-acid biosynthesis; L-serine biosynthesis; L-serine from 3-phospho-D-glycerate: step 2/3. It participates in cofactor biosynthesis; pyridoxine 5'-phosphate biosynthesis; pyridoxine 5'-phosphate from D-erythrose 4-phosphate: step 3/5. Catalyzes the reversible conversion of 3-phosphohydroxypyruvate to phosphoserine and of 3-hydroxy-2-oxo-4-phosphonooxybutanoate to phosphohydroxythreonine. This is Phosphoserine aminotransferase from Coxiella burnetii (strain CbuG_Q212) (Coxiella burnetii (strain Q212)).